We begin with the raw amino-acid sequence, 79 residues long: Sec-independent protein translocase protein TatA (79 aa).

A helical transmembrane segment spans residues 1 to 21; sequence MGGWSSPSHWLIILLIVVLLF. The segment covering 52–61 has biased composition (basic and acidic residues); that stretch reads KNTQKIEENK. The segment at 52–79 is disordered; sequence KNTQKIEENKNTTNNTSADASIDKTKKA.

This sequence belongs to the TatA/E family. As to quaternary structure, the Tat system comprises two distinct complexes: a TatABC complex, containing multiple copies of TatA, TatB and TatC subunits, and a separate TatA complex, containing only TatA subunits. Substrates initially bind to the TatABC complex, which probably triggers association of the separate TatA complex to form the active translocon.

The protein localises to the cell inner membrane. In terms of biological role, part of the twin-arginine translocation (Tat) system that transports large folded proteins containing a characteristic twin-arginine motif in their signal peptide across membranes. TatA could form the protein-conducting channel of the Tat system. In Campylobacter jejuni subsp. jejuni serotype O:6 (strain 81116 / NCTC 11828), this protein is Sec-independent protein translocase protein TatA.